A 330-amino-acid chain; its full sequence is DNA-directed RNA polymerase subunit alpha (330 aa).

The interval 1 to 236 (MQGSVTEFLK…EQLDAFVDLR (236 aa)) is alpha N-terminal domain (alpha-NTD). The segment at 250 to 330 (FDPILLRPVD…NWPPASIAED (81 aa)) is alpha C-terminal domain (alpha-CTD).

It belongs to the RNA polymerase alpha chain family. Homodimer. The RNAP catalytic core consists of 2 alpha, 1 beta, 1 beta' and 1 omega subunit. When a sigma factor is associated with the core the holoenzyme is formed, which can initiate transcription.

It carries out the reaction RNA(n) + a ribonucleoside 5'-triphosphate = RNA(n+1) + diphosphate. In terms of biological role, DNA-dependent RNA polymerase catalyzes the transcription of DNA into RNA using the four ribonucleoside triphosphates as substrates. This chain is DNA-directed RNA polymerase subunit alpha, found in Vibrio cholerae serotype O1 (strain ATCC 39315 / El Tor Inaba N16961).